Consider the following 311-residue polypeptide: MYKQGEPNLWTGRLDSETDPKKFRHFQTVTFEDLSKLEKSSMPSGVGILGYAVDKGVALNKGRIGAKEGPDAIKQAFAGLPDLNQCETLVDYGNVYHDHEELIDTQKEFAMLAAKSIANHRQTFLLGGGHDIAYAQYLATRKVYPTQSIGVINIDAHFDTRAEQQSTSGTSFRQILEEDENTDYLVLGIAQGGNTQSLFDYAKEKKIDYVFADELLSHVSPTIKDMIERFVHEHDVIMFTICMDVIDSAFAPGVSAPAVLGLYPHTVLELAKRIIPSDKVSSVSIAEMNPTYDADNRTAKLVANLVHHFLK.

Positions 130, 155, 157, 159, 242, and 244 each coordinate Mn(2+).

This sequence belongs to the arginase family. Mn(2+) serves as cofactor.

The enzyme catalyses N-formimidoyl-L-glutamate + H2O = formamide + L-glutamate. The protein operates within amino-acid degradation; L-histidine degradation into L-glutamate; L-glutamate from N-formimidoyl-L-glutamate (hydrolase route): step 1/1. Functionally, catalyzes the conversion of N-formimidoyl-L-glutamate to L-glutamate and formamide. The sequence is that of Formimidoylglutamase from Staphylococcus aureus (strain Mu3 / ATCC 700698).